The primary structure comprises 558 residues: Protein NRT1/ PTR FAMILY 2.3 (558 aa).

The next 12 membrane-spanning stretches (helical) occupy residues 33 to 53 (TLLG…VFLI), 69 to 89 (VANG…DSFF), 92 to 112 (IPVI…LTLI), 128 to 148 (VLCT…LALV), 176 to 196 (FFNW…TAIV), 203 to 223 (SWKL…IVFV), 329 to 349 (LWLS…LIVL), 371 to 391 (VIII…VFPM), 403 to 423 (LQKV…SAVV), 439 to 459 (VLWL…QFPA), 478 to 498 (SLTS…IDLI), and 517 to 537 (VYWL…VCSW).

It belongs to the major facilitator superfamily. Proton-dependent oligopeptide transporter (POT/PTR) (TC 2.A.17) family. Expressed in flowers, siliques and root epidermis or cortex. Detected in shoots.

It localises to the membrane. Functionally, transporter involved in a passive nitrate efflux. The protein is Protein NRT1/ PTR FAMILY 2.3 (NPF2.3) of Arabidopsis thaliana (Mouse-ear cress).